A 358-amino-acid chain; its full sequence is MKFILIDQAPELPIEFLPKGDCYRKGRLFGPKGEEIENTTDCDLLQDARRAAEAHRRARYKVQSIIRPGITLLEIVRSIEDSTRTLLEGERNNGIGFPAGMSMNSCAAHYTVNPGEEDIVLKEDDVLKVDFGTHSNGRIMDSAFTVAFQENLQPLLMAAREGTETGIRSLGIDARVCDIGRDINEVITSYEVEIEGKTWPIRPVSDLHGHSISQFKIHGGISIPAVNNRDTTRIKGDTFYAVETFATTGKGFINDRSPCSHFMLNVHKSRKLFNKDLIKVYEFVKSSFGTLPFSPRHLDHYNLVEGGSLKSVNLLTMMGLFTPYPPLNDIDGSKVAQFEHTVYLSENGKEILTRGDDY.

Residue His-109 coordinates substrate. Residues Asp-130, Asp-141, and His-210 each coordinate a divalent metal cation. Substrate is bound at residue His-218. A divalent metal cation contacts are provided by Glu-243 and Glu-339.

This sequence belongs to the peptidase M24A family. Methionine aminopeptidase eukaryotic type 2 subfamily. The cofactor is Co(2+). Zn(2+) is required as a cofactor. Mn(2+) serves as cofactor. It depends on Fe(2+) as a cofactor.

It localises to the cytoplasm. It carries out the reaction Release of N-terminal amino acids, preferentially methionine, from peptides and arylamides.. Cotranslationally removes the N-terminal methionine from nascent proteins. The N-terminal methionine is often cleaved when the second residue in the primary sequence is small and uncharged (Met-Ala-, Cys, Gly, Pro, Ser, Thr, or Val). This chain is Methionine aminopeptidase 2, found in Encephalitozoon intestinalis (strain ATCC 50506) (Microsporidian parasite).